A 391-amino-acid chain; its full sequence is Processive diacylglycerol beta-glucosyltransferase (391 aa).

It belongs to the glycosyltransferase 28 family. UgtP subfamily.

Its subcellular location is the cell membrane. It carries out the reaction a 1,2-diacyl-3-O-(beta-D-glucopyranosyl)-sn-glycerol + UDP-alpha-D-glucose = a 1,2-diacyl-3-O-(beta-D-Glc-(1-&gt;6)-beta-D-Glc)-sn-glycerol + UDP + H(+). The enzyme catalyses a 1,2-diacyl-sn-glycerol + UDP-alpha-D-glucose = a 1,2-diacyl-3-O-(beta-D-glucopyranosyl)-sn-glycerol + UDP + H(+). It functions in the pathway glycolipid metabolism; diglucosyl-diacylglycerol biosynthesis. Functionally, processive glucosyltransferase involved in the biosynthesis of both the bilayer- and non-bilayer-forming membrane glucolipids. Is able to successively transfer two glucosyl residues to diacylglycerol (DAG), thereby catalyzing the formation of beta-monoglucosyl-DAG (3-O-(beta-D-glucopyranosyl)-1,2-diacyl-sn-glycerol) and beta-diglucosyl-DAG (3-O-(beta-D-glucopyranosyl-beta-(1-&gt;6)-D-glucopyranosyl)-1,2-diacyl-sn-glycerol). Beta-diglucosyl-DAG is the predominant glycolipid found in Bacillales and is also used as a membrane anchor for lipoteichoic acid (LTA). This chain is Processive diacylglycerol beta-glucosyltransferase, found in Staphylococcus aureus (strain MW2).